The following is a 313-amino-acid chain: Glyoxylate/hydroxypyruvate reductase A (313 aa).

Arginine 228 is a catalytic residue. Catalysis depends on histidine 276, which acts as the Proton donor.

The protein belongs to the D-isomer specific 2-hydroxyacid dehydrogenase family. GhrA subfamily.

Its subcellular location is the cytoplasm. The enzyme catalyses glycolate + NADP(+) = glyoxylate + NADPH + H(+). It catalyses the reaction (R)-glycerate + NAD(+) = 3-hydroxypyruvate + NADH + H(+). It carries out the reaction (R)-glycerate + NADP(+) = 3-hydroxypyruvate + NADPH + H(+). In terms of biological role, catalyzes the NADPH-dependent reduction of glyoxylate and hydroxypyruvate into glycolate and glycerate, respectively. This chain is Glyoxylate/hydroxypyruvate reductase A, found in Photorhabdus laumondii subsp. laumondii (strain DSM 15139 / CIP 105565 / TT01) (Photorhabdus luminescens subsp. laumondii).